A 234-amino-acid polypeptide reads, in one-letter code: Fibronectin type III domain-containing protein 4 (234 aa).

The N-terminal stretch at 1–44 (MPSGCHSSPPSGLRGDMASLVPLSPYLSPTVLLLVSCDLGFVRA) is a signal peptide. At 45-167 (DRPPSPVNVT…GLDGERPLQT (123 aa)) the chain is on the extracellular side. The region spanning 47-140 (PPSPVNVTVT…PRVHFRTLKG (94 aa)) is the Fibronectin type-III domain. 3 N-linked (GlcNAc...) asparagine glycosylation sites follow: Asn-52, Asn-97, and Asn-147. Residues 122–160 (GLRGESPPGPRVHFRTLKGSDRLPSNSSSPGDITVEGLD) form a disordered region. The helical transmembrane segment at 168 to 188 (GEVVIIVVVLLMWAAVIGLFC) threads the bilayer. The Cytoplasmic portion of the chain corresponds to 189–234 (RQYDIIKDNDSNNNPKEKGKGPEQSPQGRPVGTRQKKSPSINTIDV). Residues 197 to 209 (NDSNNNPKEKGKG) show a composition bias toward basic and acidic residues. The segment at 197 to 234 (NDSNNNPKEKGKGPEQSPQGRPVGTRQKKSPSINTIDV) is disordered.

In terms of tissue distribution, highly expressed in the liver and the brain, including in the cortex, hypothalamus and hippocampus. Also expressed in adipose tissue.

It localises to the membrane. Its subcellular location is the secreted. In terms of biological role, has anti-inflammatory properties. In the colon, acts on macrophages to down-regulate inflammation. May suppress osteoclastogenesis and mature osteoclast resorptive function. In white adipose tissue, decreases local inflammation, via interaction with GPR116. Also required for proper systemic glucose tolerance, specifically sensitizing white adipocytes to insulin and promoting glucose uptake. The insulin sensitizing function in adipose tissue is mediated by interaction with ADGRF5/GPR116 and activation of cAMP signaling. The polypeptide is Fibronectin type III domain-containing protein 4 (FNDC4) (Homo sapiens (Human)).